The primary structure comprises 202 residues: 3-isopropylmalate dehydratase small subunit (202 aa).

This sequence belongs to the LeuD family. LeuD type 1 subfamily. In terms of assembly, heterodimer of LeuC and LeuD.

The catalysed reaction is (2R,3S)-3-isopropylmalate = (2S)-2-isopropylmalate. It functions in the pathway amino-acid biosynthesis; L-leucine biosynthesis; L-leucine from 3-methyl-2-oxobutanoate: step 2/4. Its function is as follows. Catalyzes the isomerization between 2-isopropylmalate and 3-isopropylmalate, via the formation of 2-isopropylmaleate. In Buchnera aphidicola subsp. Pemphigus spyrothecae, this protein is 3-isopropylmalate dehydratase small subunit.